The following is a 230-amino-acid chain: Large ribosomal subunit protein uL1 (230 aa).

Belongs to the universal ribosomal protein uL1 family. In terms of assembly, part of the 50S ribosomal subunit.

Functionally, binds directly to 23S rRNA. The L1 stalk is quite mobile in the ribosome, and is involved in E site tRNA release. In terms of biological role, protein L1 is also a translational repressor protein, it controls the translation of the L11 operon by binding to its mRNA. The sequence is that of Large ribosomal subunit protein uL1 from Lactobacillus gasseri (strain ATCC 33323 / DSM 20243 / BCRC 14619 / CIP 102991 / JCM 1131 / KCTC 3163 / NCIMB 11718 / NCTC 13722 / AM63).